An 84-amino-acid chain; its full sequence is Toxin Tf2 (84 aa).

The N-terminal stretch at 1 to 20 (MKRFLLFISILMMIGTIVVG) is a signal peptide. The LCN-type CS-alpha/beta domain occupies 21-83 (KEGYAMDHEG…VWDYATNKCG (63 aa)). 4 disulfide bridges follow: cysteine 31/cysteine 82, cysteine 35/cysteine 58, cysteine 43/cysteine 63, and cysteine 47/cysteine 65. Residue cysteine 82 is modified to Cysteine amide.

The protein belongs to the long (4 C-C) scorpion toxin superfamily. Sodium channel inhibitor family. Beta subfamily. Contains 4 disulfide bonds. In terms of tissue distribution, expressed by the venom gland.

It localises to the secreted. In terms of biological role, beta toxins bind voltage-independently at site-4 of sodium channels (Nav) and shift the voltage of activation toward more negative potentials thereby affecting sodium channel activation and promoting spontaneous and repetitive firing. This toxin is active against hNav1.3/SCN3A. The chain is Toxin Tf2 from Tityus fasciolatus (Central Brazilian scorpion).